Reading from the N-terminus, the 325-residue chain is MKIFDYEDIQLIPNKCIVESRSECDTTIQFGPKKFKIPVVPANMQTVMNEKLAKWFAENDYFYIMHRFDEEARIPFIKHMQNSGLFASISVGVKKAEFDFIEKLAQEKLIPEYITIDIAHGHSDSVINMIKHIKTHIPDSFVIAGNVGTPEGVRELENAGADATKVGIGPGRVCITKIKTGFGTGGWQLAALNICSKAARKPLIADGGIRTHGDIAKSIRFGASMVMIGSLFAAHEESPGETVELDGKQYKEYFGSASEFQKGEHKNVEGKKMFVEHKGSLMDTLKEMQQDLQSSISYAGGKDLKSLRTVDYVIVRNSIFNGDRD.

The active-site Thioimidate intermediate is the Cys174. Residue 203–226 coordinates NADP(+); it reads LIADGGIRTHGDIAKSIRFGASMV.

This sequence belongs to the IMPDH/GMPR family. GuaC type 2 subfamily.

The catalysed reaction is IMP + NH4(+) + NADP(+) = GMP + NADPH + 2 H(+). In terms of biological role, catalyzes the irreversible NADPH-dependent deamination of GMP to IMP. It functions in the conversion of nucleobase, nucleoside and nucleotide derivatives of G to A nucleotides, and in maintaining the intracellular balance of A and G nucleotides. This Staphylococcus aureus (strain bovine RF122 / ET3-1) protein is GMP reductase.